A 195-amino-acid polypeptide reads, in one-letter code: Apoptosis-associated speck-like protein containing a CARD (195 aa).

Positions 1–91 (MGRARDAILD…AGQLQAATHQ (91 aa)) constitute a Pyrin domain. Residues K55 and K174 each participate in a glycyl lysine isopeptide (Lys-Gly) (interchain with G-Cter in ubiquitin) cross-link. One can recognise a CARD domain in the interval 107-195 (AAKPGLHFID…SYLVEDLERS (89 aa)). S195 carries the phosphoserine modification.

As to quaternary structure, self-associates; enforced oligomerization induces apoptosis, NF-kappa-B regulation and interleukin-1 beta secretion. Homooligomers can form disk-like particles of approximately 12 nm diameter and approximately 1 nm height. Next to isoform 1, also isoform 2 and isoform 3 may be involved in oligomerization leading to functional regulation. Component of several inflammasomes containing one pattern recognition receptor/sensor, such as NLRP1, NLRP2, NLRP3, NLRP6, NLRC4, AIM2, MEFV or NOD2, and probably NLRC4, NLRP12 or IFI16. Major component of the ASC pyroptosome, a 1-2 um supramolecular assembly (one per macrophage cell) which consists of oligomerized PYCARD dimers and CASP1. Interacts with CASP1 (precursor form); the interaction induces activation of CASP1 leading to the processing of interleukin-1 beta; PYCARD competes with RIPK2 for binding to CASP1. Interacts with NLRP3; the interaction requires the homooligomerization of NLRP3. Interacts with NLRP2, NLRC4, MEFV, CARD16, AIM2, IFI16, NOD2, RIGI, RIPK2, PYDC1, PYDC2, NLRP10, CASP8, CHUK, IKBKB and BAX. Component of the AIM2 PANoptosome complex, a multiprotein complex that drives inflammatory cell death (PANoptosis). Phosphorylated. Post-translationally, 'Lys-63'-linked polyubiquitination by TRAF3 is critical for speck formation and inflammasome activation. 'Lys-63'-linked deubiquitinated by USP50; a crucial step for NLRP3-mediated inflammasome activation. 'Lys-63'-linked polyubiquitination by PELI1 is also critical for speck formation and inflammasome activation. Deubiquitinated by USP3 that cleaves 'Lys-48'-linked ubiquitin chains and strengthens its stability by blocking proteasomal degradation. In terms of tissue distribution, widely expressed at low levels. Detected in peripheral blood leukocytes, lung, small intestine, spleen, thymus, colon and at lower levels in placenta, liver and kidney. Very low expression in skeletal muscle, heart and brain. Expressed in lung epithelial cells (at protein level). Detected in the leukemia cell lines HL-60 and U-937, but not in Jurkat T-cell lymphoma and Daudi Burkitt's lymphoma. Detected in the melanoma cell line WM35, but not in WM793. Not detected in HeLa cervical carcinoma cells and MOLT-4 lymphocytic leukemia cells.

The protein resides in the cytoplasm. The protein localises to the inflammasome. It localises to the endoplasmic reticulum. Its subcellular location is the mitochondrion. It is found in the nucleus. The protein resides in the golgi apparatus membrane. Its function is as follows. Functions as a key mediator in apoptosis and inflammation. Promotes caspase-mediated apoptosis involving predominantly caspase-8 and also caspase-9 in a probable cell type-specific manner. Involved in activation of the mitochondrial apoptotic pathway, promotes caspase-8-dependent proteolytic maturation of BID independently of FADD in certain cell types and also mediates mitochondrial translocation of BAX and activates BAX-dependent apoptosis coupled to activation of caspase-9, -2 and -3. Involved in innate immune response by acting as an integral adapter in the assembly of various inflammasomes (NLRP1, NLRP2, NLRP3, NLRP6, AIM2 and probably IFI16) which recruit and activate caspase-1 leading to processing and secretion of pro-inflammatory cytokines. Caspase-1-dependent inflammation leads to macrophage pyroptosis, a form of cell death. The function as activating adapter in different types of inflammasomes is mediated by the pyrin and CARD domains and their homotypic interactions. Clustered PYCARD nucleates the formation of caspase-1 filaments through the interaction of their respective CARD domains, acting as a platform for of caspase-1 polymerization. In the NLRP1 and NLRC4 inflammasomes seems not be required but facilitates the processing of procaspase-1. In cooperation with NOD2 involved in an inflammasome activated by bacterial muramyl dipeptide leading to caspase-1 activation. May be involved in RIGI-triggered pro-inflammatory responses and inflammasome activation. In collaboration with AIM2 which detects cytosolic double-stranded DNA may also be involved in a caspase-1-independent cell death that involves caspase-8. In adaptive immunity may be involved in maturation of dendritic cells to stimulate T-cell immunity and in cytoskeletal rearrangements coupled to chemotaxis and antigen uptake may be involved in post-transcriptional regulation of the guanine nucleotide exchange factor DOCK2; the latter function is proposed to involve the nuclear form. Also involved in transcriptional activation of cytokines and chemokines independent of the inflammasome; this function may involve AP-1, NF-kappa-B, MAPK and caspase-8 signaling pathways. For regulation of NF-kappa-B activating and inhibiting functions have been reported. Modulates NF-kappa-B induction at the level of the IKK complex by inhibiting kinase activity of CHUK and IKBK. Proposed to compete with RIPK2 for association with CASP1 thereby down-regulating CASP1-mediated RIPK2-dependent NF-kappa-B activation and activating interleukin-1 beta processing. Modulates host resistance to DNA virus infection, probably by inducing the cleavage of and inactivating CGAS in presence of cytoplasmic double-stranded DNA. In terms of biological role, may have a regulating effect on the function as inflammasome adapter. Functionally, seems to inhibit inflammasome-mediated maturation of interleukin-1 beta. In Homo sapiens (Human), this protein is Apoptosis-associated speck-like protein containing a CARD.